The following is a 485-amino-acid chain: Sperm-associated antigen 8 (485 aa).

Disordered regions lie at residues 1–42 (METN…SPRS), 75–98 (KTPA…EPCA), and 127–215 (TTTD…CIPP). The span at 132–150 (SSNPGPVPGSSSGPVLGSS) shows a compositional bias: low complexity. Positions 151 to 191 (SGAGHGSGSGSGPGCGSVPGSGSGPGPGSGPGSGPGHGSGS) are enriched in gly residues. Mn regions lie at residues 327 to 340 (SSTT…PPGN) and 379 to 393 (ESVT…LAQA).

This sequence belongs to the SPAG8 family. As to quaternary structure, microtubule inner protein component of sperm flagellar doublet microtubules. Interacts with FHL5 (via second LIM domain). Interacts with RANBP9. As to expression, expressed in testis (germ cells), but not in liver, kidney, prostate and small intestine. Expressed in airway epithelial cells.

It is found in the cytoplasm. It localises to the nucleus. Its subcellular location is the cytoplasmic vesicle. The protein localises to the secretory vesicle. The protein resides in the acrosome. It is found in the cytoskeleton. It localises to the microtubule organizing center. Its subcellular location is the spindle. The protein localises to the cilium axoneme. The protein resides in the flagellum axoneme. In terms of biological role, microtubule inner protein (MIP) part of the dynein-decorated doublet microtubules (DMTs) in cilia axoneme, which is required for motile cilia beating. Plays a role in spermatogenesis by enhancing the binding of CREM isoform tau to its coactivator FHL5 and increasing the FHL5-regulated transcriptional activation of CREM isoform tau. Involved in the acrosome reaction and in binding of sperm to the zona pellucida. Plays a role in regulation of the cell cycle by controlling progression through the G2/M phase, possibly by delaying the activation of CDK1 which is required for entry into mitosis. May play a role in fertility and microtubule formation through interaction with RANBP9. This chain is Sperm-associated antigen 8, found in Homo sapiens (Human).